A 337-amino-acid polypeptide reads, in one-letter code: Outer membrane protein assembly factor BamC (337 aa).

An N-terminal signal peptide occupies residues 1 to 16 (MKKWLFPFAFVATLAG). The N-palmitoyl cysteine moiety is linked to residue cysteine 17. Cysteine 17 carries S-diacylglycerol cysteine lipidation.

This sequence belongs to the BamC family. As to quaternary structure, part of the Bam complex.

It is found in the cell outer membrane. Functionally, part of the outer membrane protein assembly complex, which is involved in assembly and insertion of beta-barrel proteins into the outer membrane. In Pasteurella multocida (strain Pm70), this protein is Outer membrane protein assembly factor BamC.